The primary structure comprises 862 residues: Protein SEY1 (862 aa).

Residues 1–743 lie on the Cytoplasmic side of the membrane; sequence MASNGHFSSV…KRSAIGGITQ (743 aa). The 254-residue stretch at 48–301 folds into the GB1/RHD3-type G domain; sequence GFNYHLISVF…IPADGFAVYA (254 aa). 58–65 lines the GTP pocket; sequence GSQSTGKS. Residues 476–500 are a coiled coil; that stretch reads SDYKQELSLFQKDLEKISSQLRKDE. Residues 744–764 traverse the membrane as a helical segment; the sequence is VPLYFYGLLLALGWNEIIAVL. Residues 765–767 lie on the Lumenal side of the membrane; sequence RNP. Residues 768-788 traverse the membrane as a helical segment; that stretch reads IYFIFLLLIGVGAYVTFRLNL. Over 789–862 the chain is Cytoplasmic; that stretch reads WGPMINMAEA…TSDDDNDDDL (74 aa). A disordered region spans residues 818–862; that stretch reads SDSGRQAMAMSGRNARGTEEYEMSSNLKSKGRRTDTSDDDNDDDL.

Belongs to the TRAFAC class dynamin-like GTPase superfamily. GB1/RHD3 GTPase family. RHD3 subfamily.

Its subcellular location is the endoplasmic reticulum membrane. Functionally, cooperates with the reticulon proteins and tubule-shaping DP1 family proteins to generate and maintain the structure of the tubular endoplasmic reticulum network. Has GTPase activity, which is required for its function in ER organization. The polypeptide is Protein SEY1 (Arthroderma otae (strain ATCC MYA-4605 / CBS 113480) (Microsporum canis)).